The primary structure comprises 408 residues: Probable serine/threonine-protein kinase PBL16 (408 aa).

A lipid anchor (N-myristoyl glycine) is attached at Gly-2. The S-palmitoyl cysteine moiety is linked to residue Cys-4. Residues 17–50 form a disordered region; that stretch reads ANAKSESPKEQSPTVEDKHIKEVQKLPSNPKEVE. Polar residues predominate over residues 18–30; that stretch reads NAKSESPKEQSPT. The segment covering 31 to 40 has biased composition (basic and acidic residues); the sequence is VEDKHIKEVQ. Thr-65 is subject to Phosphothreonine. Positions 76-360 constitute a Protein kinase domain; sequence FRQDRVLGGG…DIVDSLEPLQ (285 aa). ATP contacts are provided by residues 82 to 90 and Lys-113; that span reads LGGGGFGSV. Tyr-159 bears the Phosphotyrosine mark. Asp-209 (proton acceptor) is an active-site residue. 2 positions are modified to phosphoserine: Ser-213 and Ser-243. Phosphothreonine is present on residues Thr-244 and Thr-249. At Tyr-257 the chain carries Phosphotyrosine.

It belongs to the protein kinase superfamily. Ser/Thr protein kinase family. Palmitoylation at Cys-4 and Cys-6 are required for plasma membrane location.

It is found in the cell membrane. It carries out the reaction L-seryl-[protein] + ATP = O-phospho-L-seryl-[protein] + ADP + H(+). The enzyme catalyses L-threonyl-[protein] + ATP = O-phospho-L-threonyl-[protein] + ADP + H(+). May be involved in plant defense signaling. This chain is Probable serine/threonine-protein kinase PBL16, found in Arabidopsis thaliana (Mouse-ear cress).